Reading from the N-terminus, the 473-residue chain is Probable serine/threonine-protein kinase glkA (473 aa).

The segment at 1-84 (MTIPTDNNSS…QSSSTATVNS (84 aa)) is disordered. Low complexity predominate over residues 7–84 (NNSSNNKGYN…QSSSTATVNS (78 aa)). Residues 91–366 (YEIIKQVGQG…IDEIIAHPFL (276 aa)) enclose the Protein kinase domain. ATP is bound by residues 97–105 (VGQGTFGKV) and Lys-119. Asp-208 acts as the Proton acceptor in catalysis. Disordered stretches follow at residues 389–418 (GKSSLTTNSTSSSSTTANMTSLASSSSNNK) and 437–473 (SSNLKSIDNSNNGKSSSSSNNIPSLNNSNNGVITNTI). Residues 442 to 466 (SIDNSNNGKSSSSSNNIPSLNNSNN) show a composition bias toward low complexity.

It belongs to the protein kinase superfamily. CMGC Ser/Thr protein kinase family. GSK-3 subfamily.

It catalyses the reaction L-seryl-[tau protein] + ATP = O-phospho-L-seryl-[tau protein] + ADP + H(+). It carries out the reaction L-threonyl-[tau protein] + ATP = O-phospho-L-threonyl-[tau protein] + ADP + H(+). The chain is Probable serine/threonine-protein kinase glkA (glkA) from Dictyostelium discoideum (Social amoeba).